The primary structure comprises 452 residues: Pentatricopeptide repeat-containing protein At2g30780 (452 aa).

PPR repeat units lie at residues 137-171 (TASVYNSLMSVYMWNGLAEECQSLFKDFRRQTHCA), 173-207 (TVVTYNILVSVYGRLLMVKNMEAAFEELQKVKLPP), 208-242 (NSVTYNFLIAGYMTAWNWDKMEATFQEMKRGPVEP), 243-273 (DTDTYQLMLRGYANSGNLNRMEEMYEVIKDQ), 350-384 (KSSIMRAIIAAYFRCNEVDNLANFVKRAESAGWKL), 385-419 (CRSLYHCKIMMYGSQKRFEEMEGVVNEMAETNYGL), and 420-452 (VTKTFAIMIKAYKNHGMESDAEKVKGKMLKRGL).

It belongs to the PPR family. P subfamily.

The polypeptide is Pentatricopeptide repeat-containing protein At2g30780 (Arabidopsis thaliana (Mouse-ear cress)).